Consider the following 452-residue polypeptide: Cytoplasmic tRNA 2-thiolation protein 2 (452 aa).

Belongs to the CTU2/NCS2 family.

It localises to the cytoplasm. It functions in the pathway tRNA modification; 5-methoxycarbonylmethyl-2-thiouridine-tRNA biosynthesis. In terms of biological role, plays a central role in 2-thiolation of mcm(5)S(2)U at tRNA wobble positions of tRNA(Lys), tRNA(Glu) and tRNA(Gln). May act by forming a heterodimer with NCS6 that ligates sulfur from thiocarboxylated URM1 onto the uridine of tRNAs at wobble position. Prior mcm(5) tRNA modification by the elongator complex is required for 2-thiolation. May also be involved in protein urmylation. The sequence is that of Cytoplasmic tRNA 2-thiolation protein 2 from Candida albicans (strain SC5314 / ATCC MYA-2876) (Yeast).